Consider the following 414-residue polypeptide: MSEAQETHVEQLPESVVDAPVEEQHQEPPQAPDAPQEPQVPQESAPQESAPQEPPAPQEQNDVPPPSNAPIYEGEESHSVQDYQEAHQHHQPPEPQPYYPPPPPGEHMHGRPPMHHRQEGELSNTRLFVRPFPLDVQESELNEIFGPFGPMKEVKILNGFAFVEFEEAESAAKAIEEVHGKSFANQPLEVVYSKLPAKRYRITMKNLPEGCSWQDLKDLARENSLETTFSSVNTRDFDGTGALEFPSEEILVEALERLNNIEFRGSVITVERDDNPPPIRRSNRGGFRGRGGFRGGFRGGFRGGFSRGGFGGPRGGFGGPRGGYGGYSRGGYGGYSRGGYGGSRGGYDSPRGGYDSPRGGYSRGGYGGPRNDYGPPRGSYGGSRGGYDGPRGDYGPPRDAYRTRDAPRERSPTR.

Residues 1-11 (MSEAQETHVEQ) are compositionally biased toward basic and acidic residues. Residues 1 to 119 (MSEAQETHVE…GRPPMHHRQE (119 aa)) are disordered. Phosphoserine is present on S15. Low complexity predominate over residues 33–51 (DAPQEPQVPQESAPQESAP). The span at 52-68 (QEPPAPQEQNDVPPPSN) shows a compositional bias: pro residues. The segment covering 75 to 92 (EESHSVQDYQEAHQHHQP) has biased composition (basic and acidic residues). The residue at position 79 (S79) is a Phosphoserine. The segment covering 93–105 (PEPQPYYPPPPPG) has biased composition (pro residues). RRM domains follow at residues 125–195 (TRLF…YSKL) and 200–275 (YRIT…RDDN). Residues S182, S212, and S224 each carry the phosphoserine modification. Residues 269–299 (TVERDDNPPPIRRSNRGGFRGRGGFRGGFRG) form a disordered region. The span at 286–299 (GFRGRGGFRGGFRG) shows a compositional bias: gly residues. A dimethylated arginine mark is found at R288, R290, R294, and R298. The residue at position 302 (R302) is an Omega-N-methylarginine. Dimethylated arginine; alternate occurs at positions 307 and 314. An omega-N-methylarginine; alternate mark is found at R307 and R314. Residues R321, R329, R337, and R344 each carry the omega-N-methylarginine modification. The interval 343-414 (SRGGYDSPRG…DAPRERSPTR (72 aa)) is disordered. Over residues 346 to 360 (GYDSPRGGYDSPRGG) the composition is skewed to low complexity. R351 bears the Dimethylated arginine; alternate mark. R351 carries the omega-N-methylarginine; alternate modification. Position 356 is a phosphoserine (S356). Dimethylated arginine; alternate occurs at positions 358, 363, 377, and 384. Omega-N-methylarginine; alternate occurs at positions 358, 363, 377, and 384. The segment covering 379–389 (SYGGSRGGYDG) has biased composition (gly residues). R391 is subject to Omega-N-methylarginine. A compositionally biased stretch (basic and acidic residues) spans 399-414 (DAYRTRDAPRERSPTR).

Belongs to the RRM GAR family. Interacts with RRP6. Post-translationally, methylated by HMT1. The methylation is required for nuclear export.

Its subcellular location is the cytoplasm. The protein resides in the nucleus. It localises to the stress granule. In terms of biological role, involved in mRNA processing and export. Required for efficient splicing of a large set of pre-mRNAs by efficient co-transcriptional recruitment of the splicing machinery. Remains associated with the mRNP during early steps of translation elongation. The protein is Serine/arginine (SR)-type shuttling mRNA binding protein NPL3 of Saccharomyces cerevisiae (strain ATCC 204508 / S288c) (Baker's yeast).